A 174-amino-acid chain; its full sequence is Cytochrome c-type biogenesis protein CcmE (174 aa).

Over Met-1 to Arg-8 the chain is Cytoplasmic. The chain crosses the membrane as a helical; Signal-anchor for type II membrane protein span at residues Leu-9–Ala-29. The Periplasmic segment spans residues Leu-30–Gln-174. Residues His-131 and Tyr-135 each contribute to the heme site. The interval Lys-149 to Gln-174 is disordered. A compositionally biased stretch (basic and acidic residues) spans Leu-156–Gln-174.

The protein belongs to the CcmE/CycJ family.

It is found in the cell inner membrane. Functionally, heme chaperone required for the biogenesis of c-type cytochromes. Transiently binds heme delivered by CcmC and transfers the heme to apo-cytochromes in a process facilitated by CcmF and CcmH. The polypeptide is Cytochrome c-type biogenesis protein CcmE (Histophilus somni (strain 129Pt) (Haemophilus somnus)).